Reading from the N-terminus, the 269-residue chain is MGALPVAHSLALTAAFLPCRRPAAHGRCRRRRYRAVVAYMEPNPNSPAAIAGRLVGALPIVGLVARILNDEGGVGGDIIDFAEFRRRVSKKCTVMDSKAFYDFNQRRGKPGDPFYVLLCCWLAAIGAGLLKTEEILEGVARLRISNDIEFEEETFIDMMRAAKEKRAKLKAPAPQIPMETRAEKALEAIYVCCFGQDMVEDEDEKLLRAILNAVFPSVGRAAVERMVASMAKQVASGERKRDGRTVSKEVQQRQLKDLEFLKQNKLESS.

The N-terminal 37 residues, 1–37, are a transit peptide targeting the chloroplast; that stretch reads MGALPVAHSLALTAAFLPCRRPAAHGRCRRRRYRAVV.

The protein localises to the plastid. It localises to the chloroplast thylakoid membrane. Its function is as follows. Nuclear genome-encoded factor required for the accumulation of photosystem I (PSI). Functions as a PSI biogenesis factor. Cooperates with PYG7 to promote the stable assembly of PSI in the thylakoid membrane. May target primarily the PsaC subunit. Does not seem to be required for the expression of chloroplast genes encoding PSI subunits. This is Photosystem I assembly factor PSA3, chloroplastic from Zea mays (Maize).